The chain runs to 628 residues: Nucleoside-triphosphatase 2 (628 aa).

A signal peptide spans 1–25 (MWLPVYVPLLLVFGVSLSLPHGSLG). The Proton acceptor role is filled by glutamate 236. Asparagine 432 carries an N-linked (GlcNAc...) asparagine glycan.

The protein belongs to the GDA1/CD39 NTPase family. Homotetramer.

It is found in the secreted. The protein localises to the parasitophorous vacuole. It carries out the reaction a ribonucleoside 5'-triphosphate + H2O = a ribonucleoside 5'-diphosphate + phosphate + H(+). Functionally, may perform an important processing step in the conversion of high energy nucleotides prior to uptake by the parasite. NTPAse-II has a specific activity 4.5-fold lower than NTPAse-I in hydrolysis of ATP. The primary difference between these isozymes lies in their ability to hydrolyze nucleoside triphosphate versus diphosphate substrates. While NTPAse-II hydrolyzes ATP to ADP and ADP to AMP at almost the same rate, NTPAse-I hydrolyzes ADP to AMP at a much slower rate (0.7% of the rate for ATP). The sequence is that of Nucleoside-triphosphatase 2 (NTP1) from Toxoplasma gondii.